The sequence spans 677 residues: Protein asunder (677 aa).

The stretch at 515–540 (RLKLSKAKDQYRLLYRELEQLIQLNS) forms a coiled coil. Residues 578–598 (ESPLSPERLEPTSSSSSNSLL) are compositionally biased toward low complexity. Residues 578–604 (ESPLSPERLEPTSSSSSNSLLKARKRR) are disordered. Residues 598 to 604 (LKARKRR) carry the Nuclear localization signal (NLS) motif.

The protein belongs to the Integrator subunit 13 family. As to quaternary structure, belongs to the multiprotein complex Integrator, at least composed of IntS1, IntS2, IntS3, IntS4, omd/IntS5, IntS6, defl/IntS7, IntS8, IntS9, IntS10, IntS11, IntS12, asun/IntS13, IntS14 and IntS15. The core complex associates with protein phosphatase 2A subunits mts/PP2A and Pp2A-29B, to form the Integrator-PP2A (INTAC) complex. Phosphorylated.

It is found in the nucleus. It localises to the cytoplasm. The protein localises to the perinuclear region. In terms of biological role, component of the integrator complex, a multiprotein complex that terminates RNA polymerase II (Pol II) transcription in the promoter-proximal region of genes. The integrator complex provides a quality checkpoint during transcription elongation by driving premature transcription termination of transcripts that are unfavorably configured for transcriptional elongation: the complex terminates transcription by (1) catalyzing dephosphorylation of the C-terminal domain (CTD) of Pol II subunit Polr2A/Rbp1 and Spt5, and (2) degrading the exiting nascent RNA transcript via endonuclease activity. The integrator complex is also involved in the 3'-end processing of the U7 snRNA, and also the spliceosomal snRNAs U1, U2, U4 and U5. The sequence is that of Protein asunder (asun) from Drosophila willistoni (Fruit fly).